An 858-amino-acid polypeptide reads, in one-letter code: DNA mismatch repair protein MutS (858 aa).

600–607 (GPNMSGKS) contributes to the ATP binding site.

This sequence belongs to the DNA mismatch repair MutS family.

This protein is involved in the repair of mismatches in DNA. It is possible that it carries out the mismatch recognition step. This protein has a weak ATPase activity. The chain is DNA mismatch repair protein MutS from Bacillus pumilus (strain SAFR-032).